We begin with the raw amino-acid sequence, 244 residues long: tRNA pseudouridine synthase A (244 aa).

Residue Asp52 is the Nucleophile of the active site. Position 110 (Tyr110) interacts with substrate.

This sequence belongs to the tRNA pseudouridine synthase TruA family. As to quaternary structure, homodimer.

The enzyme catalyses uridine(38/39/40) in tRNA = pseudouridine(38/39/40) in tRNA. Functionally, formation of pseudouridine at positions 38, 39 and 40 in the anticodon stem and loop of transfer RNAs. This is tRNA pseudouridine synthase A from Thermoanaerobacter pseudethanolicus (strain ATCC 33223 / 39E) (Clostridium thermohydrosulfuricum).